Reading from the N-terminus, the 172-residue chain is Small ribosomal subunit protein uS5 (172 aa).

The 64-residue stretch at 17–80 (LKEKMIAINR…EEARRNMTKV (64 aa)) folds into the S5 DRBM domain.

The protein belongs to the universal ribosomal protein uS5 family. As to quaternary structure, part of the 30S ribosomal subunit. Contacts proteins S4 and S8.

Its function is as follows. With S4 and S12 plays an important role in translational accuracy. Functionally, located at the back of the 30S subunit body where it stabilizes the conformation of the head with respect to the body. The chain is Small ribosomal subunit protein uS5 from Polaromonas naphthalenivorans (strain CJ2).